Reading from the N-terminus, the 275-residue chain is NAC domain-containing protein 2 (275 aa).

The NAC domain maps to 10–162 (LPPGFRFHPT…DWVLCRIYKK (153 aa)). A DNA-binding region spans residues 107–168 (VGIKKALVFY…IYKKKNLERA (62 aa)).

Expressed in roots, stem, flowers, and leaves.

It localises to the nucleus. Its function is as follows. Transcription factor that binds DNA motifs 5'-CGT[AG](5N)NACG[ACT][AC][AT][ACG][ACT]-3' and 5'-CACG[ACT][AC][AT][AGT][CT]-3' in target genes promoters. Promotes leaf senescence (developmental, light-induced and ABA-induced senescence) and regulates fruit yield and sugar content, probably by establishing abscisic acid (ABA) homeostasis. Activates the expression of senescence and ABA associated genes including NCED1, ABCG40, CYP707A2, SAG113, SGR1 and PAO, by directly binding to their promoters. This Solanum lycopersicum (Tomato) protein is NAC domain-containing protein 2.